The following is a 349-amino-acid chain: Probable trehalose-phosphate phosphatase H (349 aa).

The protein belongs to the trehalose phosphatase family. A divalent metal cation serves as cofactor.

The catalysed reaction is alpha,alpha-trehalose 6-phosphate + H2O = alpha,alpha-trehalose + phosphate. Its pathway is glycan biosynthesis; trehalose biosynthesis. Functionally, removes the phosphate from trehalose 6-phosphate to produce free trehalose. Trehalose accumulation in plant may improve abiotic stress tolerance. The polypeptide is Probable trehalose-phosphate phosphatase H (TPPH) (Arabidopsis thaliana (Mouse-ear cress)).